The following is a 369-amino-acid chain: Histidinol-phosphate aminotransferase 3 (369 aa).

Position 220 is an N6-(pyridoxal phosphate)lysine (K220).

It belongs to the class-II pyridoxal-phosphate-dependent aminotransferase family. Histidinol-phosphate aminotransferase subfamily. Homodimer. Pyridoxal 5'-phosphate is required as a cofactor.

The enzyme catalyses L-histidinol phosphate + 2-oxoglutarate = 3-(imidazol-4-yl)-2-oxopropyl phosphate + L-glutamate. Its pathway is amino-acid biosynthesis; L-histidine biosynthesis; L-histidine from 5-phospho-alpha-D-ribose 1-diphosphate: step 7/9. This is Histidinol-phosphate aminotransferase 3 (hisC3) from Mesorhizobium japonicum (strain LMG 29417 / CECT 9101 / MAFF 303099) (Mesorhizobium loti (strain MAFF 303099)).